The sequence spans 409 residues: MAQNFTKLNPQFENIIFEHDDNQMILNFGPQHPSSHGQLRLILELEGEKIIKATPEIGYLHRGCEKLGENMTYNEYMPTTDRLDYTSSTSNNYAYAYAVETLLNLEIPRRAQVIRTILLELNRMISHIFFISVHALDVGAMSVFLYAFKTREYGLDLMEDYCGARLTHNAIRIGGVPLDLPPNWLEGLKKFLGEMRECKKLIQGLLDKNRIWRMRLENVGVVTQKMAQSWGMSGIMLRGTGIAYDIRKEEPYELYKELDFDVPVGNYGDSYDRYCLYMLEIDESIRIIEQLIPMYAKTDTPIMAQNPHYISAPKEDIMTQNYALMQHFVLVAQGMRPPIGEVYAPTESPKGELGFFIHSEGEPYPHRLKIRAPSFYHIGALSDILVGQYLADAVTVIGSTNAVFGEVDR.

Belongs to the complex I 49 kDa subunit family. As to quaternary structure, NDH-1 is composed of 14 different subunits. Subunits NuoB, C, D, E, F, and G constitute the peripheral sector of the complex.

It localises to the cell inner membrane. The enzyme catalyses a quinone + NADH + 5 H(+)(in) = a quinol + NAD(+) + 4 H(+)(out). Its function is as follows. NDH-1 shuttles electrons from NADH, via FMN and iron-sulfur (Fe-S) centers, to quinones in the respiratory chain. The immediate electron acceptor for the enzyme in this species is believed to be ubiquinone. Couples the redox reaction to proton translocation (for every two electrons transferred, four hydrogen ions are translocated across the cytoplasmic membrane), and thus conserves the redox energy in a proton gradient. The protein is NADH-quinone oxidoreductase subunit D of Helicobacter pylori (strain HPAG1).